The chain runs to 203 residues: ATP-dependent Clp protease proteolytic subunit (203 aa).

Catalysis depends on Ser107, which acts as the Nucleophile. The active site involves His132.

It belongs to the peptidase S14 family. Fourteen ClpP subunits assemble into 2 heptameric rings which stack back to back to give a disk-like structure with a central cavity, resembling the structure of eukaryotic proteasomes.

The protein localises to the cytoplasm. It catalyses the reaction Hydrolysis of proteins to small peptides in the presence of ATP and magnesium. alpha-casein is the usual test substrate. In the absence of ATP, only oligopeptides shorter than five residues are hydrolyzed (such as succinyl-Leu-Tyr-|-NHMec, and Leu-Tyr-Leu-|-Tyr-Trp, in which cleavage of the -Tyr-|-Leu- and -Tyr-|-Trp bonds also occurs).. Its function is as follows. Cleaves peptides in various proteins in a process that requires ATP hydrolysis. Has a chymotrypsin-like activity. Plays a major role in the degradation of misfolded proteins. This is ATP-dependent Clp protease proteolytic subunit from Shewanella woodyi (strain ATCC 51908 / MS32).